Consider the following 146-residue polypeptide: Acidic phospholipase A2 S8-51 (146 aa).

The N-terminal stretch at 1 to 19 is a signal peptide; sequence MYPAHLLVLLAVCVSLLGA. Residues 20–27 constitute a propeptide that is removed on maturation; the sequence is ASIPPQPL. 7 disulfide bridges follow: cysteine 38–cysteine 98, cysteine 54–cysteine 145, cysteine 56–cysteine 72, cysteine 71–cysteine 126, cysteine 78–cysteine 119, cysteine 87–cysteine 112, and cysteine 105–cysteine 117. Tyrosine 55, glycine 57, and glycine 59 together coordinate Ca(2+). Histidine 75 is a catalytic residue. Residue aspartate 76 coordinates Ca(2+). The active site involves aspartate 120.

Belongs to the phospholipase A2 family. Group I subfamily. D49 sub-subfamily. Requires Ca(2+) as cofactor. As to expression, expressed by the venom gland.

It is found in the secreted. The catalysed reaction is a 1,2-diacyl-sn-glycero-3-phosphocholine + H2O = a 1-acyl-sn-glycero-3-phosphocholine + a fatty acid + H(+). Snake venom phospholipase A2 (PLA2) that inhibits collagen-induced platelet aggregation. PLA2 catalyzes the calcium-dependent hydrolysis of the 2-acyl groups in 3-sn-phosphoglycerides. This is Acidic phospholipase A2 S8-51 from Austrelaps superbus (Lowland copperhead snake).